The chain runs to 117 residues: Fluoride-specific ion channel FluC 2 (117 aa).

4 consecutive transmembrane segments (helical) span residues 4–24 (FLIG…GDII), 31–51 (KFPW…GIIT), 59–79 (LSMI…TFMY), and 94–114 (LIYI…GEFI). Glycine 69 and threonine 72 together coordinate Na(+).

It belongs to the fluoride channel Fluc/FEX (TC 1.A.43) family.

It localises to the cell membrane. It carries out the reaction fluoride(in) = fluoride(out). With respect to regulation, na(+) is not transported, but it plays an essential structural role and its presence is essential for fluoride channel function. Fluoride-specific ion channel. Important for reducing fluoride concentration in the cell, thus reducing its toxicity. The protein is Fluoride-specific ion channel FluC 2 of Clostridium acetobutylicum (strain ATCC 824 / DSM 792 / JCM 1419 / IAM 19013 / LMG 5710 / NBRC 13948 / NRRL B-527 / VKM B-1787 / 2291 / W).